A 364-amino-acid polypeptide reads, in one-letter code: Probable UDP-arabinopyranose mutase 1 (364 aa).

Residues 103 to 105 (DDD) carry the DXD motif motif. Arg151 is a glycosylation site (N-linked (Glc...) arginine).

Belongs to the RGP family. As to quaternary structure, homopentamer or homohexamer. The cofactor is Mn(2+). Mg(2+) is required as a cofactor. In terms of processing, reversibly glycosylated by UDP-glucose, UDP-xylose and UDP-galactose, but not UDP-mannose.

It localises to the secreted. The protein localises to the cell wall. The protein resides in the cell junction. Its subcellular location is the plasmodesma. It is found in the golgi apparatus. The enzyme catalyses UDP-beta-L-arabinofuranose = UDP-beta-L-arabinopyranose. Inhibited by inhibitor protein (IP) which may be a form of sucrose synthase. In terms of biological role, probable UDP-L-arabinose mutase involved in the biosynthesis of cell wall non-cellulosic polysaccharides. Was initially shown to possess an autoglycosylating activity which is dependent on the presence of UDP-glucose and manganese. The chain is Probable UDP-arabinopyranose mutase 1 from Pisum sativum (Garden pea).